The sequence spans 121 residues: Large ribosomal subunit protein uL18 (121 aa).

Belongs to the universal ribosomal protein uL18 family. In terms of assembly, part of the 50S ribosomal subunit; part of the 5S rRNA/L5/L18/L25 subcomplex. Contacts the 5S and 23S rRNAs.

In terms of biological role, this is one of the proteins that bind and probably mediate the attachment of the 5S RNA into the large ribosomal subunit, where it forms part of the central protuberance. This Verminephrobacter eiseniae (strain EF01-2) protein is Large ribosomal subunit protein uL18.